A 198-amino-acid polypeptide reads, in one-letter code: Large ribosomal subunit protein bL25 (198 aa).

This sequence belongs to the bacterial ribosomal protein bL25 family. CTC subfamily. Part of the 50S ribosomal subunit; part of the 5S rRNA/L5/L18/L25 subcomplex. Contacts the 5S rRNA. Binds to the 5S rRNA independently of L5 and L18.

Its function is as follows. This is one of the proteins that binds to the 5S RNA in the ribosome where it forms part of the central protuberance. This chain is Large ribosomal subunit protein bL25, found in Chlorobium phaeobacteroides (strain DSM 266 / SMG 266 / 2430).